A 509-amino-acid polypeptide reads, in one-letter code: ATP synthase subunit alpha (509 aa).

Residue 169–176 coordinates ATP; that stretch reads GDRKTGKT.

The protein belongs to the ATPase alpha/beta chains family. As to quaternary structure, F-type ATPases have 2 components, CF(1) - the catalytic core - and CF(0) - the membrane proton channel. CF(1) has five subunits: alpha(3), beta(3), gamma(1), delta(1), epsilon(1). CF(0) has three main subunits: a(1), b(2) and c(9-12). The alpha and beta chains form an alternating ring which encloses part of the gamma chain. CF(1) is attached to CF(0) by a central stalk formed by the gamma and epsilon chains, while a peripheral stalk is formed by the delta and b chains.

It is found in the cell membrane. It carries out the reaction ATP + H2O + 4 H(+)(in) = ADP + phosphate + 5 H(+)(out). In terms of biological role, produces ATP from ADP in the presence of a proton gradient across the membrane. The alpha chain is a regulatory subunit. The protein is ATP synthase subunit alpha of Lacticaseibacillus casei (strain BL23) (Lactobacillus casei).